The following is a 370-amino-acid chain: Phospho-N-acetylmuramoyl-pentapeptide-transferase (370 aa).

Helical transmembrane passes span 3–23 (QIIIAGAVSFLVAIFTTPVLI), 54–74 (GLAILAGILVAYVVAGLYGLL), 79–99 (AFTASGLLVLGLTLGLGAVGF), 118–138 (AKLISQLVLALLFGFLVLRFP), 161–181 (LAVGGTVIGTIVFLIFMYILI), 197–217 (LAAGVTAIVMGSYSLMTFWQF), 238–258 (LAVLAAAGLGGCLGFLWWNAA), 262–282 (IFMGDTGSLALGGLVAGISVT), 290–310 (IIIGALFVIETVSVVIQIVVF), and 341–361 (FWLLAAMAAMAGVAIFYGDWL).

Belongs to the glycosyltransferase 4 family. MraY subfamily. Mg(2+) is required as a cofactor.

It is found in the cell membrane. The catalysed reaction is UDP-N-acetyl-alpha-D-muramoyl-L-alanyl-gamma-D-glutamyl-meso-2,6-diaminopimeloyl-D-alanyl-D-alanine + di-trans,octa-cis-undecaprenyl phosphate = di-trans,octa-cis-undecaprenyl diphospho-N-acetyl-alpha-D-muramoyl-L-alanyl-D-glutamyl-meso-2,6-diaminopimeloyl-D-alanyl-D-alanine + UMP. Its pathway is cell wall biogenesis; peptidoglycan biosynthesis. Catalyzes the initial step of the lipid cycle reactions in the biosynthesis of the cell wall peptidoglycan: transfers peptidoglycan precursor phospho-MurNAc-pentapeptide from UDP-MurNAc-pentapeptide onto the lipid carrier undecaprenyl phosphate, yielding undecaprenyl-pyrophosphoryl-MurNAc-pentapeptide, known as lipid I. The chain is Phospho-N-acetylmuramoyl-pentapeptide-transferase from Corynebacterium aurimucosum (strain ATCC 700975 / DSM 44827 / CIP 107346 / CN-1) (Corynebacterium nigricans).